The following is a 358-amino-acid chain: DnaJ homolog subfamily C member 18 (358 aa).

The 65-residue stretch at 82 to 146 folds into the J domain; that stretch reads NYYEILGVSR…DKRLRYDEYG (65 aa). Residues 228–248 traverse the membrane as a helical segment; the sequence is AFIQLLPVLVIVIISVITQLL.

The protein localises to the endoplasmic reticulum membrane. (Microbial infection) In case of infection by polyomavirus, involved in the virus endoplasmic reticulum membrane penetration and infection. Regulates the recruitment of DNAJB12:DNAJB14 into SV40-induced foci and all cooperate to guide SV40 across the endoplasmic reticulum membrane. The foci represent the site from which SV40 penetrates into the cytosol. The chain is DnaJ homolog subfamily C member 18 from Homo sapiens (Human).